Reading from the N-terminus, the 887-residue chain is 3-hydroxy-3-methylglutaryl-coenzyme A reductase (887 aa).

Over 1 to 9 (MLSRLFRMH) the chain is Cytoplasmic. Residues 10-39 (GLFVASHPWEVIVGTVTLTICMMSMNMFTG) traverse the membrane as a helical segment. At 40–56 (NNKICGWNYECPKFEED) the chain is on the lumenal side. Residues 57-78 (VLSSDIIILTITRCIAILYIYF) traverse the membrane as a helical segment. Positions 61–218 (DIIILTITRC…MTFFPACVSL (158 aa)) constitute an SSD domain. The INSIG-binding motif motif lies at 75-78 (YIYF). The Cytoplasmic segment spans residues 79-89 (QFQNLRQLGSK). Lys-89 participates in a covalent cross-link: Glycyl lysine isopeptide (Lys-Gly) (interchain with G-Cter in ubiquitin). A helical transmembrane segment spans residues 90–114 (YILGIAGLFTIFSSFVFSTVVIHFL). The Lumenal portion of the chain corresponds to 115-123 (DKELTGLNE). Residues 124 to 149 (ALPFFLLLIDLSRASALAKFALSSNS) form a helical membrane-spanning segment. Topologically, residues 150–159 (QDEVRENIAR) are cytoplasmic. A helical membrane pass occupies residues 160–187 (GMAILGPTFTLDALVECLVIGVGTMSGV). The Lumenal segment spans residues 188–191 (RQLE). The chain crosses the membrane as a helical span at residues 192–220 (IMCCFGCMSVLANYFVFMTFFPACVSLVL). The Cytoplasmic portion of the chain corresponds to 221–248 (ELSRESREGRPIWQLSHFARVLEEEENK). A Glycyl lysine isopeptide (Lys-Gly) (interchain with G-Cter in ubiquitin) cross-link involves residue Lys-248. Residues 249–275 (PNPVTQRVKMIMSLGLVLVHAHSRWIA) traverse the membrane as a helical segment. The Lumenal portion of the chain corresponds to 276-314 (DPSPQNSTAEQAKVSLGLDEDVSKRIEPSVSLWQFYLSK). The N-linked (GlcNAc...) asparagine glycan is linked to Asn-281. Residues 315–339 (MISMDIEQVITLSLAFLLAVKYIFF) form a helical membrane-spanning segment. The Cytoplasmic portion of the chain corresponds to 340–887 (EQAETESTLS…LQGTCTKKAA (548 aa)). Residues Glu-558, Lys-690, and Asp-766 each act as charge relay system in the active site. His-865 (proton donor) is an active-site residue. Ser-871 bears the Phosphoserine mark.

It belongs to the HMG-CoA reductase family. As to quaternary structure, homotetramer. Homodimer. Interacts (via its SSD) with INSIG1; the interaction, accelerated by sterols, leads to the recruitment of HMGCR to AMFR/gp78 for its ubiquitination by the sterol-mediated ERAD pathway. Interacts with UBIAD1. In terms of processing, undergoes sterol-mediated ubiquitination and ER-associated degradation (ERAD). Accumulation of sterols in the endoplasmic reticulum (ER) membrane, triggers binding of the reductase to the ER membrane protein INSIG1 or INSIG2. The INSIG1 binding leads to the recruitment of the ubiquitin ligase, AMFR/gp78, RNF139 or RNF145, initiating ubiquitination of the reductase. The ubiquitinated reductase is then extracted from the ER membrane and delivered to cytosolic 26S proteosomes by a mechanism probably mediated by the ATPase Valosin-containing protein VCP/p97. The INSIG2-binding leads to the recruitment of the ubiquitin ligase RNF139, initiating ubiquitination of the reductase. Lys-248 is the main site of ubiquitination. Ubiquitination is enhanced by the presence of a geranylgeranylated protein. Post-translationally, N-glycosylated. Deglycosylated by NGLY1 on release from the endoplasmic reticulum (ER) in a sterol-mediated manner. Phosphorylated. Phosphorylation at Ser-871 reduces the catalytic activity.

The protein resides in the endoplasmic reticulum membrane. It localises to the peroxisome membrane. The catalysed reaction is (R)-mevalonate + 2 NADP(+) + CoA = (3S)-3-hydroxy-3-methylglutaryl-CoA + 2 NADPH + 2 H(+). Its pathway is metabolic intermediate biosynthesis; (R)-mevalonate biosynthesis; (R)-mevalonate from acetyl-CoA: step 3/3. With respect to regulation, regulated by a negative feedback mechanism through sterols and non-sterol metabolites derived from mevalonate. Phosphorylation at Ser-871 down-regulates the catalytic activity. Catalyzes the conversion of (3S)-hydroxy-3-methylglutaryl-CoA (HMG-CoA) to mevalonic acid, the rate-limiting step in the synthesis of cholesterol and other isoprenoids, thus plays a critical role in cellular cholesterol homeostasis. This is 3-hydroxy-3-methylglutaryl-coenzyme A reductase (Hmgcr) from Mus musculus (Mouse).